The primary structure comprises 317 residues: ADIPOR-like receptor IZH2 (317 aa).

Residues 1 to 78 (MSTLLERTKS…TFKSLFYLHN (78 aa)) are Cytoplasmic-facing. A helical membrane pass occupies residues 79-99 (ESVNIYSHLIPALGFFTVLLL). The Extracellular portion of the chain corresponds to 100 to 110 (DKSTIKVFATT). A helical membrane pass occupies residues 111-131 (TWLDHMVIDLFYSGAFACLIL). Residues 132–153 (SSSFHCLKSHSLRIATLGNKLD) lie on the Cytoplasmic side of the membrane. A helical transmembrane segment spans residues 154-174 (YLGICILIVTSMVSILYYGYF). Topologically, residues 175 to 176 (EK) are extracellular. The helical transmembrane segment at 177–197 (FSLFCLFALITVSFGIACSIV) threads the bilayer. The Cytoplasmic segment spans residues 198–212 (SLKDKFRKREWRPYR). The helical transmembrane segment at 213–233 (AGLFVCFGLSSIIPIFSGLYC) threads the bilayer. Over 234-242 (YSFSEIWTQ) the chain is Extracellular. The chain crosses the membrane as a helical span at residues 243 to 263 (IQLFWVLLGGVLYIIGAVLYG). Residues 264-276 (MRFPEKICPGKFD) lie on the Cytoplasmic side of the membrane. A helical transmembrane segment spans residues 277-297 (IWGHSHQLFHFLVVIAALCHL). Topologically, residues 298–317 (RGLLNSYELVHIKMENGIVS) are extracellular.

It belongs to the ADIPOR family.

The protein localises to the membrane. Probable receptor, which is involved in metabolic pathways that regulate lipid metabolism such as fatty acid oxidation. In Saccharomyces cerevisiae (strain ATCC 204508 / S288c) (Baker's yeast), this protein is ADIPOR-like receptor IZH2 (IZH2).